Here is a 332-residue protein sequence, read N- to C-terminus: Ferredoxin--NADP reductase 1 (332 aa).

FAD contacts are provided by Asp35, Lys43, Phe48, Val88, Phe123, Asp284, and Thr325.

Belongs to the ferredoxin--NADP reductase type 2 family. In terms of assembly, homodimer. FAD is required as a cofactor.

It catalyses the reaction 2 reduced [2Fe-2S]-[ferredoxin] + NADP(+) + H(+) = 2 oxidized [2Fe-2S]-[ferredoxin] + NADPH. The polypeptide is Ferredoxin--NADP reductase 1 (Listeria welshimeri serovar 6b (strain ATCC 35897 / DSM 20650 / CCUG 15529 / CIP 8149 / NCTC 11857 / SLCC 5334 / V8)).